Consider the following 505-residue polypeptide: Endoglucanase 5 (505 aa).

Residues M1–S31 form the signal peptide. Positions A32–L334 are catalytic. Residues H64, W68–F69, Y95, and H130 contribute to the substrate site. The active-site Proton donor is E168. A substrate-binding site is contributed by Y230. E256 acts as the Nucleophile in catalysis. Residues A262–S263, W290, and K295–E297 contribute to the substrate site. A disordered region spans residues A332–G355. The segment at G335 to G352 is linker. Residues T339 to G355 are compositionally biased toward low complexity. Positions T353–P505 constitute a CBM3 domain.

This sequence belongs to the glycosyl hydrolase 5 (cellulase A) family.

It is found in the secreted. The enzyme catalyses Endohydrolysis of (1-&gt;4)-beta-D-glucosidic linkages in cellulose, lichenin and cereal beta-D-glucans.. Its function is as follows. Endoglucanase with some exoglucanase activity. The polypeptide is Endoglucanase 5 (celV) (Pectobacterium carotovorum subsp. carotovorum (Erwinia carotovora subsp. carotovora)).